The following is a 115-amino-acid chain: Large ribosomal subunit protein uL22 (115 aa).

Belongs to the universal ribosomal protein uL22 family. In terms of assembly, part of the 50S ribosomal subunit.

This protein binds specifically to 23S rRNA; its binding is stimulated by other ribosomal proteins, e.g. L4, L17, and L20. It is important during the early stages of 50S assembly. It makes multiple contacts with different domains of the 23S rRNA in the assembled 50S subunit and ribosome. Functionally, the globular domain of the protein is located near the polypeptide exit tunnel on the outside of the subunit, while an extended beta-hairpin is found that lines the wall of the exit tunnel in the center of the 70S ribosome. In Coxiella burnetii (strain CbuK_Q154) (Coxiella burnetii (strain Q154)), this protein is Large ribosomal subunit protein uL22.